The primary structure comprises 254 residues: Insulin-like growth factor-binding protein 4 (254 aa).

The N-terminal stretch at 1–21 is a signal peptide; it reads MLPFGLVAALLLAAGPRPSLG. The 81-residue stretch at 23-103 folds into the IGFBP N-terminal domain; sequence EAIHCPPCSE…MHGQGVCTEL (81 aa). Disulfide bonds link Cys-27/Cys-53, Cys-30/Cys-55, Cys-38/Cys-56, Cys-44/Cys-59, Cys-67/Cys-80, and Cys-74/Cys-100. Asn-125 carries an N-linked (GlcNAc...) asparagine glycan. Residues Cys-131 and Cys-138 are joined by a disulfide bond. A disordered region spans residues 149–169; the sequence is RSKMKVVGTPREEPRPVPQGS. Residues 167–245 form the Thyroglobulin type-1 domain; that stretch reads QGSCQSELHR…GLEPKGELDC (79 aa). Cystine bridges form between Cys-170–Cys-200, Cys-211–Cys-222, and Cys-224–Cys-245. Ser-251 bears the Phosphoserine mark.

In terms of assembly, binds IGF2 more than IGF1.

The protein resides in the secreted. IGF-binding proteins prolong the half-life of the IGFs and have been shown to either inhibit or stimulate the growth promoting effects of the IGFs on cell culture. They alter the interaction of IGFs with their cell surface receptors. In Rattus norvegicus (Rat), this protein is Insulin-like growth factor-binding protein 4 (Igfbp4).